A 474-amino-acid chain; its full sequence is UDP-glycosyltransferase 71E1 (474 aa).

Residues serine 275, 341 to 342 (WA), 359 to 367 (HCGWNSTLE), and 381 to 384 (YAEQ) contribute to the UDP-alpha-D-glucose site.

Belongs to the UDP-glycosyltransferase family.

May glycosylate diterpenes or flavonols in leaves. The polypeptide is UDP-glycosyltransferase 71E1 (Stevia rebaudiana (Stevia)).